The following is a 425-amino-acid chain: RNA polymerase II-associated factor 1 homolog (425 aa).

A coiled-coil region spans residues 152-174 (KKNQQVEDMYRDKQSQIDAINKT). The disordered stretch occupies residues 331 to 425 (SRKSKLTLTY…KEPTVDSDSD (95 aa)). Basic and acidic residues-rich tracts occupy residues 344 to 380 (SELE…KEEG) and 393 to 402 (DKPQKSRSDS).

Belongs to the PAF1 family. Component of the PAF1 complex which consists of at least cdc-73, ctr-9, leo-1, pafo-1 and rtfo-1.

The protein resides in the nucleus. Component of the PAF1 complex which is a multifunctional complex involved in transcription initiation via genetic interactions with TATA-binding proteins, elongation and transcription-coupled histone modification. This is RNA polymerase II-associated factor 1 homolog from Caenorhabditis elegans.